The following is a 623-amino-acid chain: Chaperone protein HtpG (623 aa).

The a; substrate-binding stretch occupies residues 1-341 (MEKREFKAES…SQDLSLNISR (341 aa)). Residues 342-549 (EMLQHDRQLS…EGEVSIEMEK (208 aa)) are b. The interval 550-623 (ILSAMPNNQG…FTNDICKLMK (74 aa)) is c.

This sequence belongs to the heat shock protein 90 family. As to quaternary structure, homodimer.

The protein localises to the cytoplasm. Molecular chaperone. Has ATPase activity. This is Chaperone protein HtpG from Clostridium perfringens (strain 13 / Type A).